A 489-amino-acid chain; its full sequence is Rhamnulokinase (489 aa).

13–17 (ASSGR) provides a ligand contact to ATP. Cysteines 68 and 222 form a disulfide. Substrate is bound by residues Gly-83 and 236-238 (HDT). Residue Asp-237 is the Proton acceptor of the active site. Residue Thr-259 coordinates ATP. Residue Asn-296 participates in substrate binding. Gln-304 is a binding site for ATP. A disulfide bridge connects residues Cys-353 and Cys-370. Gly-402 contributes to the ATP binding site. Cys-413 and Cys-417 form a disulfide bridge.

This sequence belongs to the rhamnulokinase family. The cofactor is Mg(2+).

The catalysed reaction is L-rhamnulose + ATP = L-rhamnulose 1-phosphate + ADP + H(+). Its pathway is carbohydrate degradation; L-rhamnose degradation; glycerone phosphate from L-rhamnose: step 2/3. In terms of biological role, involved in the catabolism of L-rhamnose (6-deoxy-L-mannose). Catalyzes the transfer of the gamma-phosphate group from ATP to the 1-hydroxyl group of L-rhamnulose to yield L-rhamnulose 1-phosphate. This chain is Rhamnulokinase, found in Salmonella paratyphi B (strain ATCC BAA-1250 / SPB7).